A 178-amino-acid polypeptide reads, in one-letter code: Caveolin-1 (178 aa).

Serine 2 is subject to N-acetylserine. Serine 2 bears the Phosphoserine mark. Residues 2 to 94 (SGGKYVDSEG…WKASFTTFTV (93 aa)) form a required for homooligomerization region. The Cytoplasmic portion of the chain corresponds to 2–104 (SGGKYVDSEG…TKYWFYRLLS (103 aa)). The residue at position 5 (lysine 5) is an N6-acetyllysine; alternate. Lysine 5 participates in a covalent cross-link: Glycyl lysine isopeptide (Lys-Gly) (interchain with G-Cter in ubiquitin); alternate. Phosphotyrosine is present on tyrosine 6. A Phosphoserine modification is found at serine 9. Tyrosine 14 is subject to Phosphotyrosine; by ABL1. Residue tyrosine 25 is modified to Phosphotyrosine. Residues lysine 26, lysine 30, lysine 39, lysine 47, and lysine 57 each participate in a glycyl lysine isopeptide (Lys-Gly) (interchain with G-Cter in ubiquitin) cross-link. The interval 82-94 (DGIWKASFTTFTV) is interaction with CAVIN3. The helical intramembrane region spans 105-125 (GIFGIPMALIWGVYFAILSFL). The Cytoplasmic segment spans residues 126 to 178 (HIWAVVPCIKSFLIEIQCISRVYSIYVHTFCDPLFEAIGKIFSNIRISTQKEI). Residues 131–142 (VPCIKSFLIEIQ) are interacts with SPRY1, SPRY2, SPRY3 and SPRY4. S-palmitoyl cysteine attachment occurs at residues cysteine 133, cysteine 143, and cysteine 156. Positions 149–160 (SIYVHTFCDPLF) are interacts with SPRY1, SPRY2, and SPRY4. An interacts with SPRY1, SPRY2, SPRY3 and SPRY4 region spans residues 167–178 (FSNIRISTQKEI).

This sequence belongs to the caveolin family. As to quaternary structure, homooligomer. Interacts with GLIPR2. Interacts with NOSTRIN. Interacts with SNAP25 and STX1A. Interacts (via the N-terminus) with DPP4; the interaction is direct. Interacts with CTNNB1, CDH1 and JUP. Interacts with PACSIN2; this interaction induces membrane tubulation. Interacts with SLC7A9. Interacts with BMX and BTK. Interacts with TGFBR1. Interacts with CAVIN3 (via leucine-zipper domain) in a cholesterol-sensitive manner. Interacts with CAVIN1. Interacts with EHD2 in a cholesterol-dependent manner. Forms a ternary complex with UBXN6 and VCP; mediates CAV1 targeting to lysosomes for degradation. Interacts with ABCG1; this interaction regulates ABCG1-mediated cholesterol efflux. Interacts with NEU3; this interaction enhances NEU3 sialidase activity within caveola. Interacts (via C-terminus) with SPRY1, SPRY2 (via C-terminus), SPRY3, and SPRY4. Interacts with IGFBP5; this interaction allows trafficking of IGFBP5 from the plasma membrane to the nucleus. Phosphorylated at Tyr-14 by ABL1 in response to oxidative stress. Post-translationally, ubiquitinated. Undergo monoubiquitination and multi- and/or polyubiquitination. Monoubiquitination of N-terminal lysines promotes integration in a ternary complex with UBXN6 and VCP which promotes oligomeric CAV1 targeting to lysosomes for degradation. Ubiquitinated by ZNRF1; leading to degradation and modulation of the TLR4-mediated immune response.

Its subcellular location is the golgi apparatus membrane. It is found in the cell membrane. The protein resides in the membrane. It localises to the caveola. The protein localises to the membrane raft. Its function is as follows. May act as a scaffolding protein within caveolar membranes. Forms a stable heterooligomeric complex with CAV2 that targets to lipid rafts and drives caveolae formation. Mediates the recruitment of CAVIN proteins (CAVIN1/2/3/4) to the caveolae. Interacts directly with G-protein alpha subunits and can functionally regulate their activity. Involved in the costimulatory signal essential for T-cell receptor (TCR)-mediated T-cell activation. Its binding to DPP4 induces T-cell proliferation and NF-kappa-B activation in a T-cell receptor/CD3-dependent manner. Recruits CTNNB1 to caveolar membranes and may regulate CTNNB1-mediated signaling through the Wnt pathway. Negatively regulates TGFB1-mediated activation of SMAD2/3 by mediating the internalization of TGFBR1 from membrane rafts leading to its subsequent degradation. Binds 20(S)-hydroxycholesterol (20(S)-OHC). The protein is Caveolin-1 (CAV1) of Echinops telfairi (Lesser hedgehog tenrec).